A 313-amino-acid chain; its full sequence is Aspartate carbamoyltransferase catalytic subunit (313 aa).

Residues R58 and T59 each contribute to the carbamoyl phosphate site. K86 is an L-aspartate binding site. Carbamoyl phosphate is bound by residues R108, H136, and Q139. L-aspartate-binding residues include R169 and R223. Carbamoyl phosphate is bound by residues G264 and P265.

The protein belongs to the aspartate/ornithine carbamoyltransferase superfamily. ATCase family. As to quaternary structure, heterododecamer (2C3:3R2) of six catalytic PyrB chains organized as two trimers (C3), and six regulatory PyrI chains organized as three dimers (R2).

The catalysed reaction is carbamoyl phosphate + L-aspartate = N-carbamoyl-L-aspartate + phosphate + H(+). It functions in the pathway pyrimidine metabolism; UMP biosynthesis via de novo pathway; (S)-dihydroorotate from bicarbonate: step 2/3. Its function is as follows. Catalyzes the condensation of carbamoyl phosphate and aspartate to form carbamoyl aspartate and inorganic phosphate, the committed step in the de novo pyrimidine nucleotide biosynthesis pathway. The sequence is that of Aspartate carbamoyltransferase catalytic subunit from Halothermothrix orenii (strain H 168 / OCM 544 / DSM 9562).